The primary structure comprises 1070 residues: DNA-directed RNA polymerase subunit beta (1070 aa).

It belongs to the RNA polymerase beta chain family. In terms of assembly, in plastids the minimal PEP RNA polymerase catalytic core is composed of four subunits: alpha, beta, beta', and beta''. When a (nuclear-encoded) sigma factor is associated with the core the holoenzyme is formed, which can initiate transcription.

It is found in the plastid. The protein resides in the chloroplast. It catalyses the reaction RNA(n) + a ribonucleoside 5'-triphosphate = RNA(n+1) + diphosphate. In terms of biological role, DNA-dependent RNA polymerase catalyzes the transcription of DNA into RNA using the four ribonucleoside triphosphates as substrates. In Chloranthus spicatus (Chulantree), this protein is DNA-directed RNA polymerase subunit beta.